Consider the following 617-residue polypeptide: Chaperone protein HscA homolog (617 aa).

Residues 1–23 (MALLQIAEPGQSSAPHEHKRAAG) form a disordered region.

It belongs to the heat shock protein 70 family.

Functionally, chaperone involved in the maturation of iron-sulfur cluster-containing proteins. Has a low intrinsic ATPase activity which is markedly stimulated by HscB. The chain is Chaperone protein HscA homolog from Vibrio vulnificus (strain YJ016).